The chain runs to 49 residues: Photosystem I reaction center subunit IX (49 aa).

The chain crosses the membrane as a helical span at residues 14 to 34 (FISTAPVAATIWLTITAGILI).

It belongs to the PsaJ family.

Its subcellular location is the cellular thylakoid membrane. In terms of biological role, may help in the organization of the PsaE and PsaF subunits. In Nostoc punctiforme (strain ATCC 29133 / PCC 73102), this protein is Photosystem I reaction center subunit IX.